The primary structure comprises 263 residues: Taurine import ATP-binding protein TauB (263 aa).

The 232-residue stretch at 4 to 235 (LTAEAISLSF…RYAAGETVRS (232 aa)) folds into the ABC transporter domain. 40-47 (GPSGCGKS) contacts ATP.

This sequence belongs to the ABC transporter superfamily. Taurine importer (TC 3.A.1.17.1) family. In terms of assembly, the complex is composed of two ATP-binding proteins (TauB), two transmembrane proteins (TauC) and a solute-binding protein (TauA).

The protein localises to the cell inner membrane. It carries out the reaction taurine(out) + ATP + H2O = taurine(in) + ADP + phosphate + H(+). Functionally, part of the ABC transporter complex TauABC involved in taurine import. Responsible for energy coupling to the transport system. The chain is Taurine import ATP-binding protein TauB from Pseudomonas aeruginosa (strain UCBPP-PA14).